Consider the following 201-residue polypeptide: NADH-quinone oxidoreductase subunit C (201 aa).

This sequence belongs to the complex I 30 kDa subunit family. In terms of assembly, NDH-1 is composed of 14 different subunits. Subunits NuoB, C, D, E, F, and G constitute the peripheral sector of the complex.

It is found in the cell inner membrane. The catalysed reaction is a quinone + NADH + 5 H(+)(in) = a quinol + NAD(+) + 4 H(+)(out). NDH-1 shuttles electrons from NADH, via FMN and iron-sulfur (Fe-S) centers, to quinones in the respiratory chain. The immediate electron acceptor for the enzyme in this species is believed to be ubiquinone. Couples the redox reaction to proton translocation (for every two electrons transferred, four hydrogen ions are translocated across the cytoplasmic membrane), and thus conserves the redox energy in a proton gradient. This Aromatoleum aromaticum (strain DSM 19018 / LMG 30748 / EbN1) (Azoarcus sp. (strain EbN1)) protein is NADH-quinone oxidoreductase subunit C.